A 549-amino-acid polypeptide reads, in one-letter code: SET and MYND domain-containing protein DDB_G0277331 (549 aa).

The 257-residue stretch at 27-283 (KGIELRYCDG…KDEELFINYS (257 aa)) folds into the SET domain. Positions 71, 74, 90, 93, 99, 103, 111, and 115 each coordinate Zn(2+). The MYND-type zinc-finger motif lies at 71 to 115 (CDECLKNKLDLEEGKTLKRCSNCKLVYYCSTDCQTKAWKIHKQEC). Residues 340–401 (NINNNNNNNN…IIKNLQNKLS (62 aa)) adopt a coiled-coil conformation.

This sequence belongs to the class V-like SAM-binding methyltransferase superfamily.

Probable methyltransferase. The sequence is that of SET and MYND domain-containing protein DDB_G0277331 from Dictyostelium discoideum (Social amoeba).